A 578-amino-acid polypeptide reads, in one-letter code: Suppressor of smlA (578 aa).

Involved in regulation of group size of aggregation streams. The chain is Suppressor of smlA (sslA1) from Dictyostelium discoideum (Social amoeba).